The following is a 44-amino-acid chain: Large ribosomal subunit protein bL34 (44 aa).

Positions 21-44 (RMDTSGGRRILSARRRKGRKTISA) are disordered. The segment covering 31–44 (LSARRRKGRKTISA) has biased composition (basic residues).

Belongs to the bacterial ribosomal protein bL34 family.

This is Large ribosomal subunit protein bL34 from Endomicrobium trichonymphae.